Here is a 418-residue protein sequence, read N- to C-terminus: Tryptophan synthase beta chain (418 aa).

The segment covering 1 to 17 (MTSTLPNASTPDPSSLQ) has biased composition (polar residues). The segment at 1 to 23 (MTSTLPNASTPDPSSLQPAVRPG) is disordered. Lys111 carries the post-translational modification N6-(pyridoxal phosphate)lysine.

Belongs to the TrpB family. As to quaternary structure, tetramer of two alpha and two beta chains. Pyridoxal 5'-phosphate serves as cofactor.

It catalyses the reaction (1S,2R)-1-C-(indol-3-yl)glycerol 3-phosphate + L-serine = D-glyceraldehyde 3-phosphate + L-tryptophan + H2O. It participates in amino-acid biosynthesis; L-tryptophan biosynthesis; L-tryptophan from chorismate: step 5/5. In terms of biological role, the beta subunit is responsible for the synthesis of L-tryptophan from indole and L-serine. This Synechococcus sp. (strain CC9605) protein is Tryptophan synthase beta chain.